A 343-amino-acid polypeptide reads, in one-letter code: N-acetyl-gamma-glutamyl-phosphate reductase (343 aa).

The active site involves Cys-147.

This sequence belongs to the NAGSA dehydrogenase family. Type 1 subfamily.

It localises to the cytoplasm. It catalyses the reaction N-acetyl-L-glutamate 5-semialdehyde + phosphate + NADP(+) = N-acetyl-L-glutamyl 5-phosphate + NADPH + H(+). It participates in amino-acid biosynthesis; L-arginine biosynthesis; N(2)-acetyl-L-ornithine from L-glutamate: step 3/4. In terms of biological role, catalyzes the NADPH-dependent reduction of N-acetyl-5-glutamyl phosphate to yield N-acetyl-L-glutamate 5-semialdehyde. The protein is N-acetyl-gamma-glutamyl-phosphate reductase of Listeria monocytogenes serotype 4a (strain HCC23).